Here is a 439-residue protein sequence, read N- to C-terminus: Forkhead box protein J1-B (439 aa).

Positions 124-218 form a DNA-binding region, fork-head; sequence KPPYSYATLI…MNGAMKKRRL (95 aa).

Belongs to the FOXJ1 family.

The protein resides in the nucleus. Its function is as follows. Key transcription factor required for motile ciliogenesis. Activates genes essential for motile cilia formation and function. The chain is Forkhead box protein J1-B (foxj1-b) from Xenopus laevis (African clawed frog).